The following is an 89-amino-acid chain: Small ribosomal subunit protein uS19 (89 aa).

It belongs to the universal ribosomal protein uS19 family.

In terms of biological role, protein S19 forms a complex with S13 that binds strongly to the 16S ribosomal RNA. This chain is Small ribosomal subunit protein uS19, found in Xylella fastidiosa (strain M23).